An 836-amino-acid chain; its full sequence is Neuroligin-2 (836 aa).

The N-terminal stretch at 1 to 14 is a signal peptide; that stretch reads MWLLALCLVGLAGA. At 15-678 the chain is on the extracellular side; sequence QRGGGGPGGG…DSRDYSTELS (664 aa). N-linked (GlcNAc...) asparagine glycans are attached at residues N98 and N136. 3 disulfide bridges follow: C106/C141, C317/C328, and C487/C521. The N-linked (GlcNAc...) asparagine glycan is linked to N522. The interval 623–661 is disordered; the sequence is PPYATRWPPRTPGPGTSGTRRPPPPATLPPESDIDLGPR. Residues 679-699 form a helical membrane-spanning segment; it reads VTVAVGASLLFLNILAFAALY. The segment at 679 to 699 is required for interaction with LHFPL4; that stretch reads VTVAVGASLLFLNILAFAALY. Residues 700-836 are Cytoplasmic-facing; that stretch reads YKRDRRQELR…LPHPHSTTRV (137 aa). Disordered regions lie at residues 711-735 and 791-836; these read RRLS…TAGR and LLPS…TTRV. Phosphoserine occurs at positions 714 and 719. The span at 717 to 728 shows a compositional bias: gly residues; the sequence is GGSGSGVPGGGP. Over residues 796-819 the composition is skewed to pro residues; sequence LGPPPPPPPPSLHPFGPFPPPPPT. Over residues 824–836 the composition is skewed to polar residues; that stretch reads NNTLPHPHSTTRV.

Belongs to the type-B carboxylesterase/lipase family. In terms of assembly, interacts with neurexins NRXN1, NRXN2 and NRXN3. Interaction with neurexins is mediated by heparan sulfate glycan modification on neurexin. Interacts (via its C-terminus) with DLG4/PSD-95 (via PDZ domain 3). Interacts with PATJ. Interacts with GPHN. Interacts with MDGA1 and MDGA2. Found in a complex with MAGI2 and IGSF9B, where it interacts with MAGI2 (via WW 1, WW 2 and PDZ 2 domains). Identified in a complex of 720 kDa composed of LHFPL4, NLGN2, GABRA1, GABRB2, GABRG2 and GABRB3. Interacts with LHFPL4; leading to mutual regulation of the protein level and synaptic clustering. Interacts with GABRA1. Detected on hippocampus neurons, especially at inhibitory synapses. Detected in retina, in the outer and inner plexiform layer. Detected in pancreas, in islet of Langerhans beta cells (at protein level). Expressed in brain, spinal cord and dorsal root ganglion. Detected in brain, and at lower levels in pancreas islet beta cells.

Its subcellular location is the cell membrane. It localises to the postsynaptic cell membrane. It is found in the presynaptic cell membrane. Its function is as follows. Transmembrane scaffolding protein involved in cell-cell interactions via its interactions with neurexin family members. Mediates cell-cell interactions both in neurons and in other types of cells, such as Langerhans beta cells. Plays a role in synapse function and synaptic signal transmission, especially via gamma-aminobutyric acid receptors (GABA(A) receptors). Functions by recruiting and clustering synaptic proteins. Promotes clustering of postsynaptic GABRG2 and GPHN. Promotes clustering of postsynaptic LHFPL4. Modulates signaling by inhibitory synapses, and thereby plays a role in controlling the ratio of signaling by excitatory and inhibitory synapses and information processing. Required for normal signal amplitude from inhibitory synapses, but is not essential for normal signal frequency. May promote the initial formation of synapses, but is not essential for this. In vitro, triggers the de novo formation of presynaptic structures. Mediates cell-cell interactions between Langerhans beta cells and modulates insulin secretion. The sequence is that of Neuroligin-2 (Nlgn2) from Rattus norvegicus (Rat).